Consider the following 190-residue polypeptide: Hypoxanthine/guanine phosphoribosyltransferase (190 aa).

The protein belongs to the purine/pyrimidine phosphoribosyltransferase family. Archaeal HPRT subfamily. Homodimer.

It is found in the cytoplasm. The enzyme catalyses IMP + diphosphate = hypoxanthine + 5-phospho-alpha-D-ribose 1-diphosphate. It carries out the reaction GMP + diphosphate = guanine + 5-phospho-alpha-D-ribose 1-diphosphate. It participates in purine metabolism; IMP biosynthesis via salvage pathway; IMP from hypoxanthine: step 1/1. Functionally, catalyzes a salvage reaction resulting in the formation of IMP that is energically less costly than de novo synthesis. The protein is Hypoxanthine/guanine phosphoribosyltransferase of Methanobacterium paludis (strain DSM 25820 / JCM 18151 / SWAN1).